Reading from the N-terminus, the 378-residue chain is MTPPLSDKQTLPPKQTIVVKLGTSVLTGGTLKLDRAHMVELVRQCAYLRRYGHKVIIVTSGAIAAGREHLDYPELPKTMASKQLLAAVGQSRLIQEWESLFGIYGLHVGQMLLTRADLDDRERYLNARDMLIALLDNGIIPVVNENDAVATTEIKVGDNDNLSALVGILGGADKLLLLTDQPGLFTADPRNNPDAELIREVHTIDETLRKLAGGSAGGLGTGGMATKLQAADVARRAGIEVIIAAGSRPDVISDLASGESVGTRFLPLDTPLESRKRWILAGPPPAGDIVIDAGAAKAVLERGSSLLSKGISEVKGAFERGEVARIFDTNGVLLARGICRYSSRDMAMIVGKHSQEIYKVLGYEYGPVAIHRDDLVVI.

Residue lysine 20 coordinates ATP. Serine 60, aspartate 147, and asparagine 159 together coordinate substrate. ATP contacts are provided by residues threonine 179–aspartate 180 and threonine 221–lysine 227. The region spanning alanine 286 to glutamate 364 is the PUA domain.

This sequence belongs to the glutamate 5-kinase family.

The protein localises to the cytoplasm. It carries out the reaction L-glutamate + ATP = L-glutamyl 5-phosphate + ADP. It functions in the pathway amino-acid biosynthesis; L-proline biosynthesis; L-glutamate 5-semialdehyde from L-glutamate: step 1/2. Its function is as follows. Catalyzes the transfer of a phosphate group to glutamate to form L-glutamate 5-phosphate. The sequence is that of Glutamate 5-kinase from Photobacterium profundum (strain SS9).